Consider the following 140-residue polypeptide: 3-hydroxyacyl-[acyl-carrier-protein] dehydratase FabZ (140 aa).

Residue histidine 48 is part of the active site.

This sequence belongs to the thioester dehydratase family. FabZ subfamily.

The protein resides in the cytoplasm. It catalyses the reaction a (3R)-hydroxyacyl-[ACP] = a (2E)-enoyl-[ACP] + H2O. Functionally, involved in unsaturated fatty acids biosynthesis. Catalyzes the dehydration of short chain beta-hydroxyacyl-ACPs and long chain saturated and unsaturated beta-hydroxyacyl-ACPs. The sequence is that of 3-hydroxyacyl-[acyl-carrier-protein] dehydratase FabZ from Pelotomaculum thermopropionicum (strain DSM 13744 / JCM 10971 / SI).